The primary structure comprises 107 residues: Class I hydrophobin hgfI (107 aa).

An N-terminal signal peptide occupies residues 1–24 (MFSKLAIFATAAFAVLAAATPVRR). Intrachain disulfides connect cysteine 27/cysteine 88, cysteine 34/cysteine 82, cysteine 35/cysteine 68, and cysteine 89/cysteine 102.

This sequence belongs to the fungal hydrophobin family. In terms of assembly, self-assembles to form functional amyloid fibrils called rodlets with a length range 100-150 nm. Self-assembly into fibrillar rodlets occurs spontaneously at hydrophobic:hydrophilic interfaces and the rodlets further associate laterally to form amphipathic monolayers. As to expression, only weekly expressed in hyphae cultured in liquid medium.

It is found in the secreted. It localises to the cell wall. Functionally, aerial growth, conidiation, and dispersal of filamentous fungi in the environment rely upon a capability of their secreting small amphipathic proteins called hydrophobins (HPBs) with low sequence identity. Class I can self-assemble into an outermost layer of rodlet bundles on aerial cell surfaces, conferring cellular hydrophobicity that supports fungal growth, development and dispersal; whereas Class II form highly ordered films at water-air interfaces through intermolecular interactions but contribute nothing to the rodlet structure. HgfI is a class I hydrophobin that is involved in cell surface hydrophobicity and lowers the surface tension of water and change the nature of the surfaces to which it adsorbs. This chain is Class I hydrophobin hgfI, found in Grifola frondosa (Maitake).